Consider the following 76-residue polypeptide: Histone H2A (76 aa).

Residues 1-23 (MSGRGKTGGKARAKAKTRSSRAG) are disordered. S2 is subject to N-acetylserine; in acipensins. Residue S2 is modified to N-acetylserine; in histone H2A. Phosphoserine; in histone H2A is present on S2. K6 bears the N6-(2-hydroxyisobutyryl)lysine mark. K6 is modified (N6-acetyllysine; in histone H2A). The span at 7 to 19 (TGGKARAKAKTRS) shows a compositional bias: basic residues. N6-(2-hydroxyisobutyryl)lysine; alternate is present on K10. The residue at position 10 (K10) is an N6-lactoyllysine; alternate. Position 10 is an N6-succinyllysine (K10). Residues K14 and K16 each participate in a glycyl lysine isopeptide (Lys-Gly) (interchain with G-Cter in ubiquitin); in histone H2A cross-link. Residue K37 is modified to N6-(2-hydroxyisobutyryl)lysine; alternate. K65 and K66 each carry N6-(2-hydroxyisobutyryl)lysine.

It belongs to the histone H2A family. The nucleosome is a histone octamer containing two molecules each of H2A, H2B, H3 and H4 assembled in one H3-H4 heterotetramer and two H2A-H2B heterodimers. The octamer wraps approximately 147 bp of DNA. In terms of processing, phosphorylation on Ser-2 is enhanced during mitosis. Phosphorylation on Ser-2 directly represses transcription.

The protein localises to the nucleus. Its subcellular location is the chromosome. Functionally, core component of nucleosome. Nucleosomes wrap and compact DNA into chromatin, limiting DNA accessibility to the cellular machineries which require DNA as a template. Histones thereby play a central role in transcription regulation, DNA repair, DNA replication and chromosomal stability. DNA accessibility is regulated via a complex set of post-translational modifications of histones, also called histone code, and nucleosome remodeling. Acipensins are antimicrobial peptides. Acipensins 1 and 2 have antibacterial activity against Gram-positive bacteria L.monocytogenes EGD (MIC are 1.1 uM and 1.0 uM, respectively) and S.aureus ATCC 33591 (MIC are 0.9 uM and 0.6 uM, respectively), against Gram-negative bacterium E.coli ML-35p (MIC are 0.7 uM and 0.3 uM, respectively) and antifungal activity against C.albicans 820 (MIC are 1.0 uM and 0.9 uM, respectively). Acipensin 6 has antibacterial activity against Gram-negative bacterium E.coli ML-35p (MIC=2.5 uM). Antimicrobial activity is reduced by high ionic strength. Acipensins 1, 2 and 6 have no hemolytic (up to 40 uM) or cytotoxic (up to 20 uM) effects on human cells in vitro. The protein is Histone H2A of Acipenser gueldenstaedtii (Russian sturgeon).